Reading from the N-terminus, the 197-residue chain is uncharacterized protein (197 aa).

4 helical membrane-spanning segments follow: residues 9–29 (IYIL…RFIL), 67–87 (LASL…ILML), 104–124 (IIAV…ISVI), and 160–180 (GLDL…MLVI).

It belongs to the YggT family.

The protein resides in the cell membrane. This is an uncharacterized protein from Pseudomonas aeruginosa (strain ATCC 15692 / DSM 22644 / CIP 104116 / JCM 14847 / LMG 12228 / 1C / PRS 101 / PAO1).